The primary structure comprises 360 residues: Phosphoserine aminotransferase (360 aa).

R41 contributes to the L-glutamate binding site. W101, T152, D172, and Q195 together coordinate pyridoxal 5'-phosphate. Position 196 is an N6-(pyridoxal phosphate)lysine (K196). 237 to 238 provides a ligand contact to pyridoxal 5'-phosphate; sequence NT.

It belongs to the class-V pyridoxal-phosphate-dependent aminotransferase family. SerC subfamily. Homodimer. Pyridoxal 5'-phosphate serves as cofactor.

It localises to the cytoplasm. The catalysed reaction is O-phospho-L-serine + 2-oxoglutarate = 3-phosphooxypyruvate + L-glutamate. The enzyme catalyses 4-(phosphooxy)-L-threonine + 2-oxoglutarate = (R)-3-hydroxy-2-oxo-4-phosphooxybutanoate + L-glutamate. It participates in amino-acid biosynthesis; L-serine biosynthesis; L-serine from 3-phospho-D-glycerate: step 2/3. The protein operates within cofactor biosynthesis; pyridoxine 5'-phosphate biosynthesis; pyridoxine 5'-phosphate from D-erythrose 4-phosphate: step 3/5. Functionally, catalyzes the reversible conversion of 3-phosphohydroxypyruvate to phosphoserine and of 3-hydroxy-2-oxo-4-phosphonooxybutanoate to phosphohydroxythreonine. The sequence is that of Phosphoserine aminotransferase from Burkholderia ambifaria (strain MC40-6).